A 314-amino-acid chain; its full sequence is Serine acetyltransferase 1, chloroplastic (314 aa).

This sequence belongs to the transferase hexapeptide repeat family. As to quaternary structure, homomultimer. Interacts with OASA1 and CYP20-3. Component of the cysteine synthase complex (CSC) composed of two OAS-TL dimers and one SAT hexamer. In terms of tissue distribution, mostly expressed in leaves. Localized in cortex, trichomes and vascular tissues, particularly in phloem.

The protein localises to the plastid. It is found in the chloroplast. Its subcellular location is the cytoplasm. It carries out the reaction L-serine + acetyl-CoA = O-acetyl-L-serine + CoA. It participates in amino-acid biosynthesis; L-cysteine biosynthesis; L-cysteine from L-serine: step 1/2. Functionally, serine acetyltransferase which catalyzes the formation of O-acetyl-L-serine from acetyl-CoA and L-serine. Also displays O-acetylserine (thio1)-lyase activity in vitro. May be involved in detoxification process by mediating the production of glutathione. The chain is Serine acetyltransferase 1, chloroplastic (SAT1) from Arabidopsis thaliana (Mouse-ear cress).